The primary structure comprises 505 residues: MEEFQGYIEREGSWQHNFLYPLIFQEYLFRFAYGHGLNQSILLETSGNRKYSLLIVKRLITRMDQQNHLIPSANDSNQNDFWGHKHNFYSQMISEGFSGIVEIPFYRLLIASLEKQKKVKSHNFRSIHSIFPFLEDKFLPLNSVLDILLPYPAHLEILVQILRDWVRDASSLHLLRFFLYEDHNNNCNSLFTPKNSISFFFFRNQRFFVFLYNFHVCEYESIFFFLCNQSSHLRSTSYRALLERTFFYGKLDYLVNLFTKDFAVILWLFKDPSPHSVRYKGKFILASKGTFFLMHKWKFYLIHFWQCHFSVWSHPRRIYLNRLSTHCLDFIGFLSSVQLTSSVVRSQMLENAFLIDNTIKRFDPKIPISTLFGSLAKAQFCNRLGHPISKSVWIDLSDSDIIDRFGRICRNLSHYYSGSSRKKSLYRLKYILQISCARTLARKHKSAARAFLKRLGSEFLEEFFTEHEKVLSLILPKNGSNSRGFYRGSIWYLDIICIHNLANDE.

This sequence belongs to the intron maturase 2 family. MatK subfamily.

It is found in the plastid. The protein localises to the chloroplast. Functionally, usually encoded in the trnK tRNA gene intron. Probably assists in splicing its own and other chloroplast group II introns. The protein is Maturase K of Silene otites (Spanish catchfly).